The sequence spans 438 residues: Glutamate-1-semialdehyde 2,1-aminomutase (438 aa).

K278 carries the post-translational modification N6-(pyridoxal phosphate)lysine.

This sequence belongs to the class-III pyridoxal-phosphate-dependent aminotransferase family. HemL subfamily. Homodimer. Requires pyridoxal 5'-phosphate as cofactor.

The protein resides in the cytoplasm. It catalyses the reaction (S)-4-amino-5-oxopentanoate = 5-aminolevulinate. It functions in the pathway porphyrin-containing compound metabolism; protoporphyrin-IX biosynthesis; 5-aminolevulinate from L-glutamyl-tRNA(Glu): step 2/2. In Delftia acidovorans (strain DSM 14801 / SPH-1), this protein is Glutamate-1-semialdehyde 2,1-aminomutase.